The sequence spans 620 residues: 1-deoxy-D-xylulose-5-phosphate synthase (620 aa).

Residues His-80 and 121–123 (GHS) contribute to the thiamine diphosphate site. Asp-152 contacts Mg(2+). Thiamine diphosphate-binding positions include 153–154 (GA), Asn-181, Tyr-288, and Glu-370. Position 181 (Asn-181) interacts with Mg(2+).

The protein belongs to the transketolase family. DXPS subfamily. As to quaternary structure, homodimer. Mg(2+) serves as cofactor. It depends on thiamine diphosphate as a cofactor.

The enzyme catalyses D-glyceraldehyde 3-phosphate + pyruvate + H(+) = 1-deoxy-D-xylulose 5-phosphate + CO2. It functions in the pathway metabolic intermediate biosynthesis; 1-deoxy-D-xylulose 5-phosphate biosynthesis; 1-deoxy-D-xylulose 5-phosphate from D-glyceraldehyde 3-phosphate and pyruvate: step 1/1. Its function is as follows. Catalyzes the acyloin condensation reaction between C atoms 2 and 3 of pyruvate and glyceraldehyde 3-phosphate to yield 1-deoxy-D-xylulose-5-phosphate (DXP). The protein is 1-deoxy-D-xylulose-5-phosphate synthase of Salmonella paratyphi A (strain ATCC 9150 / SARB42).